A 441-amino-acid polypeptide reads, in one-letter code: MPQPSLSSLYSDHLRTLTARADEALQRGGFEHLVVPSGSTHYQLFDDRDYPYAVNPQFKAWVPLTRVPDSWLVYTPGKRPTVIFYQPFDYWHVVPDAPSGWWVDHCDIHIIRTPDQALALLPKHAERCAILGEPHSTLGAYVPNNPQPVLDYLEYQRAFKTPYELALLRIAQQLAVRGHRAAEAAFRAGQSEFGIHMAYCAAVGQDANDLPYGNIIALNEHGAVLHYTELGQQPPQPLRSFLIDAGASAYGYASDITRTYAADPDSDFQALIDAVDAAQLRMGQNVRAGVDYKQLHIDAHLALMGILKEFGILTVSPEAALATGVSAAFFPHGLGHLIGLQVHDVAGFAASDRGGRIERPPGHPYLRLTRVLEPGMVVTIEPGVYFIDMLLDEVKKNGHAASVDWQRVEAFKPYGGIRIEDEVVCTDGSAENLTRPVFAAA.

Positions 244, 255, 336, 381, and 420 each coordinate Mn(2+).

It belongs to the peptidase M24B family. Bacterial-type prolidase subfamily. Mn(2+) serves as cofactor.

It catalyses the reaction Xaa-L-Pro dipeptide + H2O = an L-alpha-amino acid + L-proline. Its function is as follows. Splits dipeptides with a prolyl residue in the C-terminal position. In Xanthomonas axonopodis pv. citri (strain 306), this protein is Xaa-Pro dipeptidase.